The chain runs to 307 residues: N-acetylmuramic acid 6-phosphate etherase (307 aa).

Residues 62–225 form the SIS domain; that stretch reads VVDAFRVGGR…TTASMIRIGK (164 aa). Catalysis depends on Glu90, which acts as the Proton donor. Residue Glu121 is part of the active site.

This sequence belongs to the GCKR-like family. MurNAc-6-P etherase subfamily. As to quaternary structure, homodimer.

It carries out the reaction N-acetyl-D-muramate 6-phosphate + H2O = N-acetyl-D-glucosamine 6-phosphate + (R)-lactate. It participates in amino-sugar metabolism; 1,6-anhydro-N-acetylmuramate degradation. Its pathway is amino-sugar metabolism; N-acetylmuramate degradation. It functions in the pathway cell wall biogenesis; peptidoglycan recycling. Functionally, specifically catalyzes the cleavage of the D-lactyl ether substituent of MurNAc 6-phosphate, producing GlcNAc 6-phosphate and D-lactate. Together with AnmK, is also required for the utilization of anhydro-N-acetylmuramic acid (anhMurNAc) either imported from the medium or derived from its own cell wall murein, and thus plays a role in cell wall recycling. The sequence is that of N-acetylmuramic acid 6-phosphate etherase from Brucella anthropi (strain ATCC 49188 / DSM 6882 / CCUG 24695 / JCM 21032 / LMG 3331 / NBRC 15819 / NCTC 12168 / Alc 37) (Ochrobactrum anthropi).